The chain runs to 244 residues: CTD nuclear envelope phosphatase 1 (244 aa).

Residues 7-29 traverse the membrane as a helical segment; that stretch reads LLGLRGFVAFAAKLWSFVLYLLR. An FCP1 homology domain is found at 57–224; the sequence is SQVKRKVLVL…LNLLPMLDAL (168 aa).

This sequence belongs to the dullard family. In terms of assembly, interacts with bmpr1a, bmpr1b and bmpr2.

The protein localises to the membrane. The protein resides in the cytoplasm. It localises to the perinuclear region. It carries out the reaction O-phospho-L-seryl-[protein] + H2O = L-seryl-[protein] + phosphate. The catalysed reaction is O-phospho-L-threonyl-[protein] + H2O = L-threonyl-[protein] + phosphate. In terms of biological role, serine/threonine protein phosphatase that may dephosphorylate and activate lipins. Lipins are phosphatidate phosphatases that catalyze the conversion of phosphatidic acid to diacylglycerol and control the metabolism of fatty acids at different levels. May indirectly modulate the lipid composition of nuclear and/or endoplasmic reticulum membranes and be required for proper nuclear membrane morphology and/or dynamics. May also indirectly regulate the production of lipid droplets and triacylglycerol. Induces neuronal differentiation by antagonizing BMP signaling. Acts both by dephosphorylating BMPR1A and by promoting BMPR2 proteasomal degradation. This chain is CTD nuclear envelope phosphatase 1 (ctdnep1), found in Xenopus tropicalis (Western clawed frog).